A 364-amino-acid polypeptide reads, in one-letter code: tRNA-specific 2-thiouridylase MnmA (364 aa).

ATP is bound by residues 6 to 13 and leucine 32; that span reads AMSGGVDS. Cysteine 101 functions as the Nucleophile in the catalytic mechanism. A disulfide bond links cysteine 101 and cysteine 193. Glycine 125 lines the ATP pocket. The interaction with tRNA stretch occupies residues 143-145; that stretch reads KDQ. Cysteine 193 (cysteine persulfide intermediate) is an active-site residue.

This sequence belongs to the MnmA/TRMU family.

Its subcellular location is the cytoplasm. It catalyses the reaction S-sulfanyl-L-cysteinyl-[protein] + uridine(34) in tRNA + AH2 + ATP = 2-thiouridine(34) in tRNA + L-cysteinyl-[protein] + A + AMP + diphosphate + H(+). Its function is as follows. Catalyzes the 2-thiolation of uridine at the wobble position (U34) of tRNA, leading to the formation of s(2)U34. The polypeptide is tRNA-specific 2-thiouridylase MnmA (Rhodococcus opacus (strain B4)).